Here is a 294-residue protein sequence, read N- to C-terminus: MYNAEKKQPTYWQRLKIAFQYVMPQLYLTLAAGWLAKQKWGSVTHFIIKLFAKKYRVNMQEAEKTEFKDYASFNEFFIRPLKADARKIDENPTALCLPADGRISQYGHIEQQTLLQAKGHSFSLVDLLAGDTELAKEFEHGEFATIYLSPRDYHRVHMPCDATLRKMIYVPGDLFSVNPFLNEHIPNLLARNERVICVFDTEFGTMVQILVGATITASMSTVWAGIINPPRSAEVKEWTYSGESAVQLRKGQEMGAFQLGSTVINLFQADKVELANHLDVGVPVRVGEVLAYKK.

Active-site charge relay system; for autoendoproteolytic cleavage activity residues include D100, H157, and S261. The Schiff-base intermediate with substrate; via pyruvic acid; for decarboxylase activity role is filled by S261. Residue S261 is modified to Pyruvic acid (Ser); by autocatalysis.

This sequence belongs to the phosphatidylserine decarboxylase family. PSD-B subfamily. Prokaryotic type I sub-subfamily. Heterodimer of a large membrane-associated beta subunit and a small pyruvoyl-containing alpha subunit. Pyruvate serves as cofactor. Post-translationally, is synthesized initially as an inactive proenzyme. Formation of the active enzyme involves a self-maturation process in which the active site pyruvoyl group is generated from an internal serine residue via an autocatalytic post-translational modification. Two non-identical subunits are generated from the proenzyme in this reaction, and the pyruvate is formed at the N-terminus of the alpha chain, which is derived from the carboxyl end of the proenzyme. The autoendoproteolytic cleavage occurs by a canonical serine protease mechanism, in which the side chain hydroxyl group of the serine supplies its oxygen atom to form the C-terminus of the beta chain, while the remainder of the serine residue undergoes an oxidative deamination to produce ammonia and the pyruvoyl prosthetic group on the alpha chain. During this reaction, the Ser that is part of the protease active site of the proenzyme becomes the pyruvoyl prosthetic group, which constitutes an essential element of the active site of the mature decarboxylase.

The protein localises to the cell membrane. The enzyme catalyses a 1,2-diacyl-sn-glycero-3-phospho-L-serine + H(+) = a 1,2-diacyl-sn-glycero-3-phosphoethanolamine + CO2. It functions in the pathway phospholipid metabolism; phosphatidylethanolamine biosynthesis; phosphatidylethanolamine from CDP-diacylglycerol: step 2/2. Catalyzes the formation of phosphatidylethanolamine (PtdEtn) from phosphatidylserine (PtdSer). The protein is Phosphatidylserine decarboxylase proenzyme of Histophilus somni (strain 129Pt) (Haemophilus somnus).